Consider the following 131-residue polypeptide: D-ribose pyranase (131 aa).

Histidine 20 (proton donor) is an active-site residue. Substrate contacts are provided by residues aspartate 28, histidine 98, and 120–122; that span reads YAN.

The protein belongs to the RbsD / FucU family. RbsD subfamily. Homodecamer.

The protein localises to the cytoplasm. It carries out the reaction beta-D-ribopyranose = beta-D-ribofuranose. Its pathway is carbohydrate metabolism; D-ribose degradation; D-ribose 5-phosphate from beta-D-ribopyranose: step 1/2. Its function is as follows. Catalyzes the interconversion of beta-pyran and beta-furan forms of D-ribose. The protein is D-ribose pyranase of Clostridium botulinum (strain Eklund 17B / Type B).